The following is a 100-amino-acid chain: Small ribosomal subunit protein uS14c (100 aa).

It belongs to the universal ribosomal protein uS14 family. As to quaternary structure, part of the 30S ribosomal subunit.

It localises to the plastid. The protein resides in the chloroplast. Its function is as follows. Binds 16S rRNA, required for the assembly of 30S particles. The chain is Small ribosomal subunit protein uS14c from Draba nemorosa (Woodland whitlowgrass).